The sequence spans 196 residues: Probable GTP-binding protein EngB (196 aa).

Positions 22–196 constitute an EngB-type G domain; that stretch reads NLPEIALSGR…GNWIEEKISK (175 aa). Residues 30 to 37, 57 to 61, 75 to 78, 142 to 145, and 175 to 177 each bind GTP; these read GRSNVGKS, GKTQT, DVPG, TKID, and FSS. Mg(2+) contacts are provided by serine 37 and threonine 59.

This sequence belongs to the TRAFAC class TrmE-Era-EngA-EngB-Septin-like GTPase superfamily. EngB GTPase family. It depends on Mg(2+) as a cofactor.

Its function is as follows. Necessary for normal cell division and for the maintenance of normal septation. The chain is Probable GTP-binding protein EngB from Lactobacillus helveticus (strain DPC 4571).